The following is a 546-amino-acid chain: Chaperonin GroEL (546 aa).

ATP contacts are provided by residues 30–33, Lys51, 87–91, Gly415, 479–481, and Asp495; these read TLGP, DGTTT, and NAA.

This sequence belongs to the chaperonin (HSP60) family. As to quaternary structure, forms a cylinder of 14 subunits composed of two heptameric rings stacked back-to-back. Interacts with the co-chaperonin GroES.

The protein resides in the cytoplasm. It carries out the reaction ATP + H2O + a folded polypeptide = ADP + phosphate + an unfolded polypeptide.. Functionally, together with its co-chaperonin GroES, plays an essential role in assisting protein folding. The GroEL-GroES system forms a nano-cage that allows encapsulation of the non-native substrate proteins and provides a physical environment optimized to promote and accelerate protein folding. This is Chaperonin GroEL from Xanthomonas campestris pv. phaseoli.